The sequence spans 327 residues: MTQTPVKIAVTGAAGQICYSLLFRIASGSLLGDTPIELRLLEITPALKALEGVVMELDDCAFGNLVNIEIGDDPKKVFDGVNAAFLVGAMPRKAGMERSDLLTKNGAIFTAQGKALNDVAADDVRVLVTGNPANTNALIAATNAVDIPNNHFAALTRLDHNRAKTQLARKTGKTVNDVRHMTIWGNHSSTQYPDVFHAEVAGQKATNLVNEAWIENEFIPTVAKRGAAIIDARGASSAASAANATVECMRDWMGSTPEGDWVSMAIPSDGSYGVPEGLISSFPVTITNGKVEIVQGLDIDDFSRAKIDASAKELADERDAVKELGLI.

Residue 12–18 (GAAGQIC) coordinates NAD(+). Residues R92 and R98 each contribute to the substrate site. NAD(+) contacts are provided by residues N105, Q112, and 129 to 131 (TGN). Positions 131 and 162 each coordinate substrate. Catalysis depends on H187, which acts as the Proton acceptor.

It belongs to the LDH/MDH superfamily. MDH type 2 family.

The catalysed reaction is (S)-malate + NAD(+) = oxaloacetate + NADH + H(+). Its function is as follows. Catalyzes the reversible oxidation of malate to oxaloacetate. The sequence is that of Malate dehydrogenase from Cutibacterium acnes (strain DSM 16379 / KPA171202) (Propionibacterium acnes).